We begin with the raw amino-acid sequence, 291 residues long: N-acetylmannosamine kinase (291 aa).

Residues 5–12 (AIDIGGTK) and 132–139 (GVGGGVVS) each bind ATP. Positions 156, 166, 168, and 173 each coordinate Zn(2+).

This sequence belongs to the ROK (NagC/XylR) family. NanK subfamily. Homodimer.

It carries out the reaction an N-acyl-D-mannosamine + ATP = an N-acyl-D-mannosamine 6-phosphate + ADP + H(+). It participates in amino-sugar metabolism; N-acetylneuraminate degradation; D-fructose 6-phosphate from N-acetylneuraminate: step 2/5. Catalyzes the phosphorylation of N-acetylmannosamine (ManNAc) to ManNAc-6-P. This Escherichia coli (strain 55989 / EAEC) protein is N-acetylmannosamine kinase.